Consider the following 345-residue polypeptide: Class I histocompatibility antigen, F10 alpha chain (345 aa).

Residues 1–22 (MGPCGALGLGLLLAAVCGAAAP) form the signal peptide. Residues 23 to 110 (ELHTLRYIQT…ILQRRYNQTG (88 aa)) form an alpha-1 region. The Extracellular portion of the chain corresponds to 23–301 (ELHTLRYIQT…WEPPQPNLVP (279 aa)). N-linked (GlcNAc...) asparagine glycans are attached at residues N59 and N107. The segment at 111 to 201 (GSHTVQWMYG…EYGKAELGRR (91 aa)) is alpha-2. 2 disulfide bridges follow: C121/C183 and C221/C277. The segment at 202-292 (ERPEVRVWGK…SLPQPGLYSW (91 aa)) is alpha-3. Positions 204–293 (PEVRVWGKEA…LPQPGLYSWE (90 aa)) constitute an Ig-like C1-type domain. The tract at residues 293 to 301 (EPPQPNLVP) is connecting peptide. Residues 302-324 (IVAGVAVAIVAIAIMVGVGFIIY) traverse the membrane as a helical segment. The Cytoplasmic portion of the chain corresponds to 325 to 345 (RRHAGKKGKGYNIAPGSNPAI).

Belongs to the MHC class I family. In terms of assembly, heterodimer of an alpha chain and a beta chain (beta-2-microglobulin).

It is found in the membrane. Involved in the presentation of foreign antigens to the immune system. This chain is Class I histocompatibility antigen, F10 alpha chain, found in Gallus gallus (Chicken).